Reading from the N-terminus, the 90-residue chain is DNA-directed RNA polymerase subunit omega (90 aa).

Belongs to the RNA polymerase subunit omega family. As to quaternary structure, the RNAP catalytic core consists of 2 alpha, 1 beta, 1 beta' and 1 omega subunit. When a sigma factor is associated with the core the holoenzyme is formed, which can initiate transcription.

It carries out the reaction RNA(n) + a ribonucleoside 5'-triphosphate = RNA(n+1) + diphosphate. Promotes RNA polymerase assembly. Latches the N- and C-terminal regions of the beta' subunit thereby facilitating its interaction with the beta and alpha subunits. This is DNA-directed RNA polymerase subunit omega from Beutenbergia cavernae (strain ATCC BAA-8 / DSM 12333 / CCUG 43141 / JCM 11478 / NBRC 16432 / NCIMB 13614 / HKI 0122).